The sequence spans 103 residues: DNA-binding protein TRF1 (103 aa).

DNA-binding protein that recognizes the inverted terminal repeats of the pGKl linear DNA plasmids. In Kluyveromyces lactis (strain ATCC 8585 / CBS 2359 / DSM 70799 / NBRC 1267 / NRRL Y-1140 / WM37) (Yeast), this protein is DNA-binding protein TRF1 (TRF1).